We begin with the raw amino-acid sequence, 609 residues long: MSMVRLYTRVLELLGAEARLGWILAGANLLLAGAQFAEPVLFGRIIDVLSGNPASGLFGMASTSPWPLLAVWAAFGLFTILCGVTVALQADRLSHRQRQAVLTGYFEHIMQLPLAYHAGTHSGRLMKVMLQGTDALWRLWLGFFREHFAAMMSLVVLLPLSLYINWRLAILLFALCIVFTMLTTLVVRRTFDMQNEVEAHFSDLSARASDALGNVALVQSFVRVDAEVQGLRFVVDKLLSAQMPVLSWWAVVTVMTRASTTITILAIFTAGIALNQRGMTSIGEIVMFVSFATMLIQRLEQVVSFINSVFMEAPRLKEFFDVLDAVPAVRDRPDAVDPGRLQGRVEFNDVSFSYDSKRPAVANLSFVASPGETIALVGPTGAGKSTAVALLHRAFDPQSGIIRIDGMDIRDLTLSGLRRNIGVVFQEPLLFNRSIAENLRVGKPDATDEEMRLAAGRAQALDFIERGEKKFDTHAGERGRMLSGGERQRLSIARALLKDPPILILDEATSALDAVTEAKVNAALDEVMKGRTTFVIAHRLSTIRNAARILVFADGRVIESGTFGELLANGGHFAQLAKAQFMTQESTQADLSSSRTNPAVEIRPLSLGN.

In terms of domain architecture, ABC transmembrane type-1 spans 21 to 311 (GWILAGANLL…VVSFINSVFM (291 aa)). A run of 6 helical transmembrane segments spans residues 22-42 (WILA…PVLF), 68-88 (LLAV…TVAL), 146-166 (EHFA…YINW), 167-187 (RLAI…TLVV), 248-268 (WWAV…LAIF), and 285-305 (IVMF…VVSF). One can recognise an ABC transporter domain in the interval 345-579 (VEFNDVSFSY…GGHFAQLAKA (235 aa)). Residue 378–385 (GPTGAGKS) participates in ATP binding.

The protein belongs to the ABC transporter superfamily. Beta-(1--&gt;2)glucan exporter (TC 3.A.1.108.1) family. Homodimer.

It is found in the cell inner membrane. It carries out the reaction [(1-&gt;2)-beta-D-glucosyl](n)(in) + ATP + H2O = [(1-&gt;2)-beta-D-glucosyl](n)(out) + ADP + phosphate + H(+). Involved in beta-(1--&gt;2)glucan export. Transmembrane domains (TMD) form a pore in the inner membrane and the ATP-binding domain (NBD) is responsible for energy generation. The protein is Beta-(1--&gt;2)glucan export ATP-binding/permease protein NdvA of Nitrobacter winogradskyi (strain ATCC 25391 / DSM 10237 / CIP 104748 / NCIMB 11846 / Nb-255).